A 327-amino-acid polypeptide reads, in one-letter code: PDZ and LIM domain protein 1 (327 aa).

The residue at position 2 (T2) is an N-acetylthreonine. Residues 3–85 (TQQIVLQGPG…NMTLTVSRSE (83 aa)) form the PDZ domain. Phosphoserine occurs at positions 90 and 130. Phosphotyrosine is present on Y142. The disordered stretch occupies residues 161-184 (VESKTSASGEEANSRPVVQPHPSG). In terms of domain architecture, LIM zinc-binding spans 256-315 (PICDKCGTGIVGVFVKLRDHHRHPECYVCTDCGINLKQKGHFFVEDQIYCEKHARERVTP). Residues C258, C261, H278, C281, C284, C287, C305, and H308 each contribute to the Zn(2+) site. The residue at position 314 (T314) is a Phosphothreonine. Phosphotyrosine is present on Y319.

In terms of assembly, interacts with ACTN1, ACTN2 and ACTN4. Interacts with PDLIM4. Expressed in heart, lung, spleen, testis and skeletal muscle.

It is found in the cytoplasm. The protein localises to the cytoskeleton. Its subcellular location is the myofibril. It localises to the sarcomere. The protein resides in the z line. In terms of biological role, cytoskeletal protein that may act as an adapter that brings other proteins (like kinases) to the cytoskeleton. Involved in assembly, disassembly and directioning of stress fibers in fibroblasts. Required for the localization of ACTN1 and PALLD to stress fibers. Required for cell migration and in maintaining cell polarity of fibroblasts. In Mus musculus (Mouse), this protein is PDZ and LIM domain protein 1 (Pdlim1).